A 92-amino-acid polypeptide reads, in one-letter code: N(2)-fixation sustaining protein CowN (92 aa).

It belongs to the CowN family.

Its function is as follows. Is required to sustain N(2)-dependent growth in the presence of low levels of carbon monoxide (CO). Probably acts by protecting the N(2) fixation ability of the nitrogenase complex, which is inactivated in the presence of CO. This is N(2)-fixation sustaining protein CowN from Rhodopseudomonas palustris (strain BisB18).